The chain runs to 221 residues: Alpha-ketoglutarate-dependent dioxygenase alkB homolog 7, mitochondrial (221 aa).

A mitochondrion-targeting transit peptide spans 1 to 23 (MAGGGQVVLRTLSQQGWVRGSGA). Histidine 121 and aspartate 123 together coordinate Fe cation. A 2-oxoglutarate-binding site is contributed by tyrosine 165. Histidine 177 provides a ligand contact to Fe cation. Residues 197-199 (RIS) and arginine 203 each bind 2-oxoglutarate.

This sequence belongs to the alkB family. Requires Fe(2+) as cofactor.

The protein resides in the mitochondrion matrix. Its function is as follows. May function as protein hydroxylase; can catalyze auto-hydroxylation at Leu-110 (in vitro), but this activity may be due to the absence of the true substrate. Required to induce programmed necrosis in response to DNA damage caused by cytotoxic alkylating agents. Acts by triggering the collapse of mitochondrial membrane potential and loss of mitochondrial function that leads to energy depletion and cell death. ALKBH7-mediated necrosis is probably required to prevent the accumulation of cells with DNA damage. Does not display DNA demethylase activity. Involved in fatty acid metabolism. This chain is Alpha-ketoglutarate-dependent dioxygenase alkB homolog 7, mitochondrial (ALKBH7), found in Bos taurus (Bovine).